Here is a 185-residue protein sequence, read N- to C-terminus: Peptidyl-tRNA hydrolase (185 aa).

Residue Tyr14 participates in tRNA binding. Residue His19 is the Proton acceptor of the active site. TRNA contacts are provided by Phe64, Asn66, and Asn112.

The protein belongs to the PTH family. In terms of assembly, monomer.

The protein localises to the cytoplasm. The enzyme catalyses an N-acyl-L-alpha-aminoacyl-tRNA + H2O = an N-acyl-L-amino acid + a tRNA + H(+). In terms of biological role, hydrolyzes ribosome-free peptidyl-tRNAs (with 1 or more amino acids incorporated), which drop off the ribosome during protein synthesis, or as a result of ribosome stalling. Its function is as follows. Catalyzes the release of premature peptidyl moieties from peptidyl-tRNA molecules trapped in stalled 50S ribosomal subunits, and thus maintains levels of free tRNAs and 50S ribosomes. This chain is Peptidyl-tRNA hydrolase, found in Latilactobacillus sakei subsp. sakei (strain 23K) (Lactobacillus sakei subsp. sakei).